We begin with the raw amino-acid sequence, 662 residues long: MDDTSGTEGDECSELERAGGWFMVEAIVDRRTGDKPSSDEDEDEDADEGEDFVDFIDDRPVGDGQEVAQELLLQQAAADDDVAVQAVKRKFAPSPYFSPVCMQPSIENELSPRLDAIKLGRQSGTAKRRLFQLPDSGYGQTQVDTESGPLQVQDICETGTQDGRQDADEGSGRNVGGNGGQEEERAGGDGEESQTQGVQTDKAACGVLAILRASNQKATLLGKFKEQFGLGFNELIRHFKSSKTVCLDWVVCVFGVYCTLAEGIKTLIQPQCDYAHIQVLSCQWGMTVLMLVRYKRAKNRETVAKGLSTLLNVPESHMLIEPPKLRSGPAALYWYKTAMSNCSDVYGETPEWIVRQTMVGHALEEAQFSLSEMVQYAYDHDITDESMLAFEYALLADTDANAAAFLSSNCQAKYVKDACTMCRHYKRGEQARMNMSEWIWFRGDKVQGDGDWKPIVQFLRYHDVEFIPFLCAFKTFLQGIPKKSCLVFYGPADTGKSYFCMSLLRFLGGVVISYANSNSHFWLQPLADAKIGLLDDATSQCWCYIDTYLRNALDGNQVCIDRKHRALLQLKCPPLLITTNINPLEDDRWKYLRSRVQLFTFKNKFPLTTQGEPLYTLNDQNWKCFFRRLWARLSLTDPDDEEENGNPSEPFRCVPGQNARTL.

Over residues 28–38 (VDRRTGDKPSS) the composition is skewed to basic and acidic residues. The interval 28-60 (VDRRTGDKPSSDEDEDEDADEGEDFVDFIDDRP) is disordered. Positions 39-55 (DEDEDEDADEGEDFVDF) are enriched in acidic residues. A Nuclear localization signal motif is present at residues 88-90 (KRK). Residues Ser-94, Ser-98, and Ser-111 each carry the phosphoserine; by host modification. The short motif at 110 to 119 (LSPRLDAIKL) is the Nuclear export signal element. The segment at 160 to 197 (TQDGRQDADEGSGRNVGGNGGQEEERAGGDGEESQTQG) is disordered. Residues 199-365 (QTDKAACGVL…QTMVGHALEE (167 aa)) are DNA-binding region. The 151-residue stretch at 464–614 (VEFIPFLCAF…FPLTTQGEPL (151 aa)) folds into the SF3 helicase domain. 490–497 (GPADTGKS) contacts ATP. Lys-571 is covalently cross-linked (Glycyl lysine isopeptide (Lys-Gly) (interchain with G-Cter in SUMO)). The segment at 637–662 (DPDDEEENGNPSEPFRCVPGQNARTL) is disordered.

The protein belongs to the papillomaviridae E1 protein family. Can form hexamers. Interacts with E2 protein; this interaction increases E1 DNA binding specificity. Interacts with host DNA polymerase subunit POLA2. Interacts with host single stranded DNA-binding protein RPA1. Interacts with host TOP1; this interaction stimulates the enzymatic activity of TOP1. Post-translationally, phosphorylated. Sumoylated.

It localises to the host nucleus. The catalysed reaction is Couples ATP hydrolysis with the unwinding of duplex DNA by translocating in the 3'-5' direction.. The enzyme catalyses ATP + H2O = ADP + phosphate + H(+). Its function is as follows. ATP-dependent DNA 3'-5' helicase required for initiation of viral DNA replication. It forms a complex with the viral E2 protein. The E1-E2 complex binds to the replication origin which contains binding sites for both proteins. During the initial step, a dimer of E1 interacts with a dimer of protein E2 leading to a complex that binds the viral origin of replication with high specificity. Then, a second dimer of E1 displaces the E2 dimer in an ATP-dependent manner to form the E1 tetramer. Following this, two E1 monomers are added to each half of the site, which results in the formation of two E1 trimers on the viral ori. Subsequently, two hexamers will be created. The double hexamer acts as a bi-directional helicase machinery and unwinds the viral DNA and then recruits the host DNA polymerase to start replication. The chain is Replication protein E1 from Homo sapiens (Human).